The chain runs to 416 residues: Coenzyme F420H(2) oxidase (416 aa).

H87, E89, D91, H92, H155, D174, and H239 together coordinate Fe cation. The Flavodoxin-like domain maps to 266 to 407 (AVIVYDTMHY…NCYNMGKELA (142 aa)). Residues 272–277 (TMHYST), 324–327 (TIYD), and 359–364 (SMGGEG) each bind FMN.

This sequence in the N-terminal section; belongs to the zinc metallo-hydrolase group 3 family. FMN serves as cofactor. It depends on Fe cation as a cofactor.

It carries out the reaction 2 reduced coenzyme F420-(gamma-L-Glu)(n) + O2 = 2 oxidized coenzyme F420-(gamma-L-Glu)(n) + 2 H2O + 2 H(+). Catalyzes the oxidation of F420H(2) with O(2). May be involved in O(2) detoxification, reducing the intracellular O(2) concentration to a level allowing growth at the expense of methane formation. This is Coenzyme F420H(2) oxidase (fprA) from Methanocaldococcus jannaschii (strain ATCC 43067 / DSM 2661 / JAL-1 / JCM 10045 / NBRC 100440) (Methanococcus jannaschii).